The primary structure comprises 185 residues: dCTP deaminase (185 aa).

DCTP contacts are provided by residues 107–112, 131–133, Gln-152, Tyr-166, and Gln-176; these read KSTYAR and TLE. Glu-133 serves as the catalytic Proton donor/acceptor.

It belongs to the dCTP deaminase family. In terms of assembly, homotrimer.

It carries out the reaction dCTP + H2O + H(+) = dUTP + NH4(+). The protein operates within pyrimidine metabolism; dUMP biosynthesis; dUMP from dCTP (dUTP route): step 1/2. Catalyzes the deamination of dCTP to dUTP. This Neorickettsia sennetsu (strain ATCC VR-367 / Miyayama) (Ehrlichia sennetsu) protein is dCTP deaminase.